Consider the following 291-residue polypeptide: Taste receptor type 2 member 16 (291 aa).

Met1 is a topological domain (extracellular). The helical transmembrane segment at 2–22 threads the bilayer; sequence IPIQLTVFFMIIYVLESLTII. Topologically, residues 23-41 are cytoplasmic; that stretch reads VQSSLIVAVLGREWLQVRR. Residues 42 to 62 traverse the membrane as a helical segment; the sequence is LMPVDMILISLGISRFCLQWA. Residues 63 to 84 lie on the Extracellular side of the membrane; that stretch reads SMLNBFCSYFNLNYVLCNLTIT. N-linked (GlcNAc...) asparagine glycosylation occurs at Asn80. The chain crosses the membrane as a helical span at residues 85-105; sequence WEFFNILTFWLNSLLTVFYCI. Topologically, residues 106–125 are cytoplasmic; it reads KVSSFTHHIFLWLRWRILRL. A helical transmembrane segment spans residues 126 to 146; sequence FPWILLGSLMITCVTIIPSAI. Residues 147-182 are Extracellular-facing; sequence GNYIQIQLLTMEHLPRNSTVTDKLEKFHQYEFQAHT. The N-linked (GlcNAc...) asparagine glycan is linked to Asn163. The helical transmembrane segment at 183-203 threads the bilayer; sequence VALVIPFILFLASTILLMASL. Residues 204-228 lie on the Cytoplasmic side of the membrane; the sequence is TKQIQHHSTGHCNPSMKAHFTALRS. Residues 229–249 form a helical membrane-spanning segment; the sequence is LAVLFIVFTSYFLTILITIIG. The Extracellular segment spans residues 250–257; sequence TLFDRRCW. The helical transmembrane segment at 258-278 threads the bilayer; sequence LWVWEAFVYAFILMHSTSLML. The Cytoplasmic portion of the chain corresponds to 279-291; it reads SSPTLKRILKGKC.

The protein belongs to the G-protein coupled receptor T2R family. As to quaternary structure, interacts with RTP3 and RTP4.

It localises to the cell membrane. Its function is as follows. Receptor that may play a role in the perception of bitterness and is gustducin-linked. May play a role in sensing the chemical composition of the gastrointestinal content. The activity of this receptor may stimulate alpha gustducin, mediate PLC-beta-2 activation and lead to the gating of TRPM5. This chain is Taste receptor type 2 member 16 (TAS2R16), found in Gorilla gorilla gorilla (Western lowland gorilla).